The primary structure comprises 312 residues: Malate dehydrogenase (312 aa).

Residues 7-13 and aspartate 34 each bind NAD(+); that span reads GAAGGIG. Arginine 81 and arginine 87 together coordinate substrate. Residues asparagine 94 and 117–119 contribute to the NAD(+) site; that span reads ITN. The substrate site is built by asparagine 119 and arginine 153. The Proton acceptor role is filled by histidine 177. Methionine 227 contributes to the NAD(+) binding site.

This sequence belongs to the LDH/MDH superfamily. MDH type 1 family. In terms of assembly, homodimer.

The catalysed reaction is (S)-malate + NAD(+) = oxaloacetate + NADH + H(+). In terms of biological role, catalyzes the reversible oxidation of malate to oxaloacetate. In Shigella dysenteriae serotype 1 (strain Sd197), this protein is Malate dehydrogenase.